Consider the following 244-residue polypeptide: Ribonuclease PH (244 aa).

Phosphate is bound by residues Arg-86 and 124 to 126 (GTR).

It belongs to the RNase PH family. In terms of assembly, homohexameric ring arranged as a trimer of dimers.

It carries out the reaction tRNA(n+1) + phosphate = tRNA(n) + a ribonucleoside 5'-diphosphate. Phosphorolytic 3'-5' exoribonuclease that plays an important role in tRNA 3'-end maturation. Removes nucleotide residues following the 3'-CCA terminus of tRNAs; can also add nucleotides to the ends of RNA molecules by using nucleoside diphosphates as substrates, but this may not be physiologically important. Probably plays a role in initiation of 16S rRNA degradation (leading to ribosome degradation) during starvation. The chain is Ribonuclease PH from Oceanobacillus iheyensis (strain DSM 14371 / CIP 107618 / JCM 11309 / KCTC 3954 / HTE831).